A 553-amino-acid polypeptide reads, in one-letter code: Coiled-coil domain-containing protein 22 homolog (553 aa).

2 coiled-coil regions span residues 261 to 404 (LEEL…TATQ) and 498 to 553 (NVTK…VAKA).

It belongs to the CCDC22 family.

This chain is Coiled-coil domain-containing protein 22 homolog, found in Drosophila pseudoobscura pseudoobscura (Fruit fly).